The sequence spans 357 residues: Glycerol-3-phosphate dehydrogenase [NAD(P)+] (357 aa).

The NADPH site is built by Ser-30, Phe-31, Arg-51, and Lys-124. Residues Lys-124 and Gly-152 each coordinate sn-glycerol 3-phosphate. NADPH is bound at residue Ala-156. Residues Lys-207, Asp-260, Ser-270, Arg-271, and Asn-272 each contribute to the sn-glycerol 3-phosphate site. Catalysis depends on Lys-207, which acts as the Proton acceptor. Residue Arg-271 participates in NADPH binding. Position 297 (Glu-297) interacts with NADPH.

This sequence belongs to the NAD-dependent glycerol-3-phosphate dehydrogenase family.

It is found in the cytoplasm. It carries out the reaction sn-glycerol 3-phosphate + NAD(+) = dihydroxyacetone phosphate + NADH + H(+). The catalysed reaction is sn-glycerol 3-phosphate + NADP(+) = dihydroxyacetone phosphate + NADPH + H(+). The protein operates within membrane lipid metabolism; glycerophospholipid metabolism. Functionally, catalyzes the reduction of the glycolytic intermediate dihydroxyacetone phosphate (DHAP) to sn-glycerol 3-phosphate (G3P), the key precursor for phospholipid synthesis. This is Glycerol-3-phosphate dehydrogenase [NAD(P)+] from Acinetobacter baumannii (strain AB307-0294).